Here is a 237-residue protein sequence, read N- to C-terminus: Leucyl/phenylalanyl-tRNA--protein transferase (237 aa).

It belongs to the L/F-transferase family.

The protein localises to the cytoplasm. The catalysed reaction is N-terminal L-lysyl-[protein] + L-leucyl-tRNA(Leu) = N-terminal L-leucyl-L-lysyl-[protein] + tRNA(Leu) + H(+). It catalyses the reaction N-terminal L-arginyl-[protein] + L-leucyl-tRNA(Leu) = N-terminal L-leucyl-L-arginyl-[protein] + tRNA(Leu) + H(+). The enzyme catalyses L-phenylalanyl-tRNA(Phe) + an N-terminal L-alpha-aminoacyl-[protein] = an N-terminal L-phenylalanyl-L-alpha-aminoacyl-[protein] + tRNA(Phe). In terms of biological role, functions in the N-end rule pathway of protein degradation where it conjugates Leu, Phe and, less efficiently, Met from aminoacyl-tRNAs to the N-termini of proteins containing an N-terminal arginine or lysine. The polypeptide is Leucyl/phenylalanyl-tRNA--protein transferase (aat) (Vibrio vulnificus (strain CMCP6)).